We begin with the raw amino-acid sequence, 259 residues long: Deoxyribose-phosphate aldolase (259 aa).

Asp-102 functions as the Proton donor/acceptor in the catalytic mechanism. Lys-167 (schiff-base intermediate with acetaldehyde) is an active-site residue. Lys-201 acts as the Proton donor/acceptor in catalysis.

It belongs to the DeoC/FbaB aldolase family. DeoC type 2 subfamily.

It localises to the cytoplasm. It catalyses the reaction 2-deoxy-D-ribose 5-phosphate = D-glyceraldehyde 3-phosphate + acetaldehyde. It participates in carbohydrate degradation; 2-deoxy-D-ribose 1-phosphate degradation; D-glyceraldehyde 3-phosphate and acetaldehyde from 2-deoxy-alpha-D-ribose 1-phosphate: step 2/2. Functionally, catalyzes a reversible aldol reaction between acetaldehyde and D-glyceraldehyde 3-phosphate to generate 2-deoxy-D-ribose 5-phosphate. This Edwardsiella ictaluri (strain 93-146) protein is Deoxyribose-phosphate aldolase.